An 872-amino-acid polypeptide reads, in one-letter code: Alanine--tRNA ligase (872 aa).

Residues H563, H567, C665, and H669 each coordinate Zn(2+).

This sequence belongs to the class-II aminoacyl-tRNA synthetase family. Zn(2+) is required as a cofactor.

Its subcellular location is the cytoplasm. It catalyses the reaction tRNA(Ala) + L-alanine + ATP = L-alanyl-tRNA(Ala) + AMP + diphosphate. Functionally, catalyzes the attachment of alanine to tRNA(Ala) in a two-step reaction: alanine is first activated by ATP to form Ala-AMP and then transferred to the acceptor end of tRNA(Ala). Also edits incorrectly charged Ser-tRNA(Ala) and Gly-tRNA(Ala) via its editing domain. The chain is Alanine--tRNA ligase from Bacteroides thetaiotaomicron (strain ATCC 29148 / DSM 2079 / JCM 5827 / CCUG 10774 / NCTC 10582 / VPI-5482 / E50).